Here is a 239-residue protein sequence, read N- to C-terminus: AA9 family lytic polysaccharide monooxygenase C (239 aa).

His1 lines the Cu(2+) pocket. Cys39 and Cys190 are joined by a disulfide. Residue Asn75 is glycosylated (N-linked (GlcNAc...) asparagine). His84 contacts Cu(2+). N-linked (GlcNAc...) asparagine glycosylation occurs at Asn135. O2 contacts are provided by His157 and Gln166. Tyr168 contacts Cu(2+). Asn194 and Asn229 each carry an N-linked (GlcNAc...) asparagine glycan.

It belongs to the polysaccharide monooxygenase AA9 family. Requires Cu(2+) as cofactor.

It localises to the secreted. It carries out the reaction [(1-&gt;4)-beta-D-glucosyl]n+m + reduced acceptor + O2 = 4-dehydro-beta-D-glucosyl-[(1-&gt;4)-beta-D-glucosyl]n-1 + [(1-&gt;4)-beta-D-glucosyl]m + acceptor + H2O.. Functionally, lytic polysaccharide monooxygenase (LPMO) that depolymerizes crystalline and amorphous polysaccharides via the oxidation of scissile alpha- or beta-(1-4)-glycosidic bonds, yielding C1 or C4 oxidation products. Catalysis by LPMOs requires the reduction of the active-site copper from Cu(II) to Cu(I) by a reducing agent and H(2)O(2) or O(2) as a cosubstrate. The sequence is that of AA9 family lytic polysaccharide monooxygenase C from Gloeophyllum trabeum (Brown rot fungus).